Reading from the N-terminus, the 196-residue chain is MPIGVPKVPFRSPGEEDASWVDIYNRLYRERLLFLGQEVDSEISNQLIGLMIYLSIEDDTQDLYLFINSPGGWVIPGVALYDTMQFVQPDVHTICMGSAASMGSFILVGGEITKRLAFPHARVMIHQPAGSFSEVATGEFILEVGELLKLRETLTRVYVQRTGKPVWVVSEDMERDVFMSATEAQAYGIVDLVAVE.

Ser-101 functions as the Nucleophile in the catalytic mechanism. His-126 is a catalytic residue.

This sequence belongs to the peptidase S14 family. Component of the chloroplastic Clp protease core complex.

Its subcellular location is the plastid. The protein resides in the chloroplast stroma. It catalyses the reaction Hydrolysis of proteins to small peptides in the presence of ATP and magnesium. alpha-casein is the usual test substrate. In the absence of ATP, only oligopeptides shorter than five residues are hydrolyzed (such as succinyl-Leu-Tyr-|-NHMec, and Leu-Tyr-Leu-|-Tyr-Trp, in which cleavage of the -Tyr-|-Leu- and -Tyr-|-Trp bonds also occurs).. Its function is as follows. Cleaves peptides in various proteins in a process that requires ATP hydrolysis. Has a chymotrypsin-like activity. Plays a major role in the degradation of misfolded proteins. The polypeptide is ATP-dependent Clp protease proteolytic subunit (Helianthus annuus (Common sunflower)).